We begin with the raw amino-acid sequence, 358 residues long: 3-isopropylmalate dehydrogenase (358 aa).

Residue 79–92 (GPKWEHLPPDEQPE) coordinates NAD(+). Substrate is bound by residues Arg-100, Arg-110, Arg-139, and Asp-227. Mg(2+) is bound by residues Asp-227, Asp-251, and Asp-255. 285 to 297 (GSAPDIAGKGVAN) contacts NAD(+).

Belongs to the isocitrate and isopropylmalate dehydrogenases family. LeuB type 1 subfamily. Homodimer. Mg(2+) serves as cofactor. Requires Mn(2+) as cofactor.

It is found in the cytoplasm. It carries out the reaction (2R,3S)-3-isopropylmalate + NAD(+) = 4-methyl-2-oxopentanoate + CO2 + NADH. It functions in the pathway amino-acid biosynthesis; L-leucine biosynthesis; L-leucine from 3-methyl-2-oxobutanoate: step 3/4. Its function is as follows. Catalyzes the oxidation of 3-carboxy-2-hydroxy-4-methylpentanoate (3-isopropylmalate) to 3-carboxy-4-methyl-2-oxopentanoate. The product decarboxylates to 4-methyl-2 oxopentanoate. This Pseudoalteromonas translucida (strain TAC 125) protein is 3-isopropylmalate dehydrogenase.